Reading from the N-terminus, the 1443-residue chain is DNA polymerase III PolC-type (1443 aa).

The Exonuclease domain maps to 408-567; that stretch reads FVIFDIETTG…YDTQALKKVF (160 aa).

This sequence belongs to the DNA polymerase type-C family. PolC subfamily.

Its subcellular location is the cytoplasm. It carries out the reaction DNA(n) + a 2'-deoxyribonucleoside 5'-triphosphate = DNA(n+1) + diphosphate. In terms of biological role, required for replicative DNA synthesis. This DNA polymerase also exhibits 3' to 5' exonuclease activity. This Mycoplasma pneumoniae (strain ATCC 29342 / M129 / Subtype 1) (Mycoplasmoides pneumoniae) protein is DNA polymerase III PolC-type.